Consider the following 472-residue polypeptide: Methanethiol oxidase (472 aa).

This sequence belongs to the selenium-binding protein family.

Its subcellular location is the nucleus. It is found in the cytoplasm. It localises to the cytosol. The protein resides in the membrane. It carries out the reaction methanethiol + O2 + H2O = hydrogen sulfide + formaldehyde + H2O2 + H(+). It participates in organosulfur degradation. In terms of biological role, catalyzes the oxidation of methanethiol, an organosulfur compound known to be produced in substantial amounts by gut bacteria. Selenium-binding protein which may be involved in the sensing of reactive xenobiotics in the cytoplasm. May be involved in intra-Golgi protein transport. The polypeptide is Methanethiol oxidase (selenbp1-b) (Xenopus laevis (African clawed frog)).